The sequence spans 372 residues: PqqA peptide cyclase (372 aa).

Positions 4 to 219 (APPPLSVLLE…VDTARRELGD (216 aa)) constitute a Radical SAM core domain. Cysteine 18, cysteine 22, and cysteine 25 together coordinate [4Fe-4S] cluster. The tract at residues 342 to 372 (ATAEREAAAPAPEFIYRRPERPAPATADTLE) is disordered.

This sequence belongs to the radical SAM superfamily. PqqE family. In terms of assembly, interacts with PqqD. The interaction is necessary for activity of PqqE. It depends on [4Fe-4S] cluster as a cofactor.

It catalyses the reaction [PQQ precursor protein] + S-adenosyl-L-methionine = E-Y cross-linked-[PQQ precursor protein] + 5'-deoxyadenosine + L-methionine + H(+). The protein operates within cofactor biosynthesis; pyrroloquinoline quinone biosynthesis. Catalyzes the cross-linking of a glutamate residue and a tyrosine residue in the PqqA protein as part of the biosynthesis of pyrroloquinoline quinone (PQQ). The protein is PqqA peptide cyclase of Xanthomonas oryzae pv. oryzae (strain MAFF 311018).